A 580-amino-acid polypeptide reads, in one-letter code: uncharacterized protein (580 aa).

Positions Pro300–Asp525 constitute a PE-PPE domain.

Belongs to the mycobacterial PPE family.

This is an uncharacterized protein from Mycobacterium tuberculosis (strain CDC 1551 / Oshkosh).